The primary structure comprises 600 residues: Isocitrate dehydrogenase kinase/phosphatase (600 aa).

ATP-binding positions include 335-341 and Lys-356; that span reads APGIRGM. Residue Asp-390 is part of the active site.

It belongs to the AceK family.

It localises to the cytoplasm. It carries out the reaction L-seryl-[isocitrate dehydrogenase] + ATP = O-phospho-L-seryl-[isocitrate dehydrogenase] + ADP + H(+). Its function is as follows. Bifunctional enzyme which can phosphorylate or dephosphorylate isocitrate dehydrogenase (IDH) on a specific serine residue. This is a regulatory mechanism which enables bacteria to bypass the Krebs cycle via the glyoxylate shunt in response to the source of carbon. When bacteria are grown on glucose, IDH is fully active and unphosphorylated, but when grown on acetate or ethanol, the activity of IDH declines drastically concomitant with its phosphorylation. The chain is Isocitrate dehydrogenase kinase/phosphatase from Bordetella parapertussis (strain 12822 / ATCC BAA-587 / NCTC 13253).